The following is a 386-amino-acid chain: Methionine aminopeptidase 1 (386 aa).

At alanine 2 the chain carries N-acetylalanine. Residues 6-59 (TRVCETDGCSSEAKLQCPTCIKLGIQGSYFCSQECFKGSWATHKLLHKKAKDEK) form a C6H2-type zinc finger. Residues cysteine 9, cysteine 14, cysteine 22, cysteine 25, cysteine 36, cysteine 40, histidine 48, histidine 52, and lysine 53 each contribute to the Zn(2+) site. An a protein-binding site is contributed by histidine 203. Zn(2+) is bound by residues aspartate 220, aspartate 231, and histidine 294. Histidine 301 provides a ligand contact to a protein. Zn(2+) is bound by residues glutamate 327 and glutamate 358.

Belongs to the peptidase M24A family. Methionine aminopeptidase type 1 subfamily. Associates with the 60S ribosomal subunit of the 80S translational complex. Zn(2+) serves as cofactor. Co(2+) is required as a cofactor. The cofactor is Mn(2+). Requires Fe(2+) as cofactor.

The protein localises to the cytoplasm. The enzyme catalyses Release of N-terminal amino acids, preferentially methionine, from peptides and arylamides.. Its function is as follows. Cotranslationally removes the N-terminal methionine from nascent proteins. The N-terminal methionine is often cleaved when the second residue in the primary sequence is small and uncharged (Met-Ala-, Cys, Gly, Pro, Ser, Thr, or Val). The sequence is that of Methionine aminopeptidase 1 (Metap1) from Mus musculus (Mouse).